Here is an 800-residue protein sequence, read N- to C-terminus: Ion-translocating oxidoreductase complex subunit C (800 aa).

4Fe-4S ferredoxin-type domains follow at residues 367–398 (DEFSVPQAEQPCIRCGACADVCPARLLPQQLY) and 408–437 (KARGYHLQECIECGACAYVCPSNIPLVQYY). [4Fe-4S] cluster-binding residues include Cys-378, Cys-381, Cys-384, Cys-388, Cys-417, Cys-420, Cys-423, and Cys-427. 5 stretches are compositionally biased toward low complexity: residues 536 to 553 (GATPAPAATDSDAAAPAP), 571 to 583 (AKQAGATPAPAAT), 599 to 617 (AAIARAKAKQAGATPAPAA), 647 to 667 (AKQAGATPAPATTDSDAADPA), and 675 to 690 (AAIAAAIARAKAKQAA). 3 disordered regions span residues 536-558 (GATPAPAATDSDAAAPAPQDDPR), 571-631 (AKQA…QDDP), and 647-706 (AKQA…ENTD). Positions 693 to 705 (HATTEPVTVQENT) are enriched in polar residues.

This sequence belongs to the 4Fe4S bacterial-type ferredoxin family. RnfC subfamily. As to quaternary structure, the complex is composed of six subunits: RnfA, RnfB, RnfC, RnfD, RnfE and RnfG. [4Fe-4S] cluster serves as cofactor.

The protein resides in the cell inner membrane. In terms of biological role, part of a membrane-bound complex that couples electron transfer with translocation of ions across the membrane. This is Ion-translocating oxidoreductase complex subunit C from Edwardsiella ictaluri (strain 93-146).